The following is a 665-amino-acid chain: Glycine--tRNA ligase beta subunit (665 aa).

Belongs to the class-II aminoacyl-tRNA synthetase family. As to quaternary structure, tetramer of two alpha and two beta subunits.

It is found in the cytoplasm. The enzyme catalyses tRNA(Gly) + glycine + ATP = glycyl-tRNA(Gly) + AMP + diphosphate. This is Glycine--tRNA ligase beta subunit (glyS) from Rickettsia prowazekii (strain Madrid E).